The primary structure comprises 212 residues: Interleukin-6 (212 aa).

Positions 1–29 are cleaved as a signal peptide; the sequence is MNSLSTSAFSPVAFSLGLLLVMATAFPTP. Cys-72 and Cys-78 are joined by a disulfide. Ser-81 bears the Phosphoserine mark. An intrachain disulfide couples Cys-101 to Cys-111. A disordered region spans residues 156 to 175; that stretch reads QKGKNPDKATTPNPTTNAGL. The segment covering 163-175 has biased composition (polar residues); that stretch reads KATTPNPTTNAGL.

The protein belongs to the IL-6 superfamily. Component of a hexamer of two molecules each of IL6, IL6R and IL6ST; first binds to IL6R to associate with the signaling subunit IL6ST. Interacts with IL6R (via the N-terminal ectodomain); this interaction may be affected by IL6R-binding with SORL1, hence decreasing IL6 cis signaling. Interacts with SORL1 (via the N-terminal ectodomain); this interaction leads to IL6 internalization and lysosomal degradation. May form a trimeric complex with the soluble SORL1 ectodomain and soluble IL6R receptor; this interaction might stabilize circulating IL6, hence promoting IL6 trans signaling.

It is found in the secreted. In terms of biological role, cytokine with a wide variety of biological functions in immunity, tissue regeneration, and metabolism. Binds to IL6R, then the complex associates to the signaling subunit IL6ST/gp130 to trigger the intracellular IL6-signaling pathway. The interaction with the membrane-bound IL6R and IL6ST stimulates 'classic signaling', whereas the binding of IL6 and soluble IL6R to IL6ST stimulates 'trans-signaling'. Alternatively, 'cluster signaling' occurs when membrane-bound IL6:IL6R complexes on transmitter cells activate IL6ST receptors on neighboring receiver cells. IL6 is a potent inducer of the acute phase response. Rapid production of IL6 contributes to host defense during infection and tissue injury, but excessive IL6 synthesis is involved in disease pathology. In the innate immune response, is synthesized by myeloid cells, such as macrophages and dendritic cells, upon recognition of pathogens through toll-like receptors (TLRs) at the site of infection or tissue injury. In the adaptive immune response, is required for the differentiation of B cells into immunoglobulin-secreting cells. Plays a major role in the differentiation of CD4(+) T cell subsets. Essential factor for the development of T follicular helper (Tfh) cells that are required for the induction of germinal-center formation. Required to drive naive CD4(+) T cells to the Th17 lineage. Also required for proliferation of myeloma cells and the survival of plasmablast cells. Its function is as follows. Acts as an essential factor in bone homeostasis and on vessels directly or indirectly by induction of VEGF, resulting in increased angiogenesis activity and vascular permeability. Induces, through 'trans-signaling' and synergistically with IL1B and TNF, the production of VEGF. Involved in metabolic controls, is discharged into the bloodstream after muscle contraction increasing lipolysis and improving insulin resistance. 'Trans-signaling' in central nervous system also regulates energy and glucose homeostasis. Mediates, through GLP-1, crosstalk between insulin-sensitive tissues, intestinal L cells and pancreatic islets to adapt to changes in insulin demand. Also acts as a myokine. Plays a protective role during liver injury, being required for maintenance of tissue regeneration. Also has a pivotal role in iron metabolism by regulating HAMP/hepcidin expression upon inflammation or bacterial infection. Through activation of IL6ST-YAP-NOTCH pathway, induces inflammation-induced epithelial regeneration. The chain is Interleukin-6 (IL6) from Sus scrofa (Pig).